Consider the following 352-residue polypeptide: tRNA pseudouridine synthase D (352 aa).

Asp-81 (nucleophile) is an active-site residue. The TRUD domain occupies 158–306; the sequence is GVPNYFGQQR…RHERRTLLLK (149 aa).

It belongs to the pseudouridine synthase TruD family.

The enzyme catalyses uridine(13) in tRNA = pseudouridine(13) in tRNA. In terms of biological role, responsible for synthesis of pseudouridine from uracil-13 in transfer RNAs. The chain is tRNA pseudouridine synthase D from Photobacterium profundum (strain SS9).